The sequence spans 624 residues: Chaperone protein HtpG (624 aa).

The segment at Met-1–Arg-336 is a; substrate-binding. The tract at residues Glu-337–Lys-552 is b. The c stretch occupies residues Leu-553–Ser-624.

Belongs to the heat shock protein 90 family. As to quaternary structure, homodimer.

It localises to the cytoplasm. Its function is as follows. Molecular chaperone. Has ATPase activity. This Klebsiella pneumoniae subsp. pneumoniae (strain ATCC 700721 / MGH 78578) protein is Chaperone protein HtpG.